The primary structure comprises 571 residues: Adenine deaminase (571 aa).

This sequence belongs to the metallo-dependent hydrolases superfamily. Adenine deaminase family. It depends on Mn(2+) as a cofactor.

It carries out the reaction adenine + H2O + H(+) = hypoxanthine + NH4(+). The protein is Adenine deaminase of Dehalococcoides mccartyi (strain ATCC BAA-2100 / JCM 16839 / KCTC 5957 / BAV1).